Here is a 340-residue protein sequence, read N- to C-terminus: UDP-3-O-acylglucosamine N-acyltransferase (340 aa).

His-237 (proton acceptor) is an active-site residue.

This sequence belongs to the transferase hexapeptide repeat family. LpxD subfamily. As to quaternary structure, homotrimer.

It carries out the reaction a UDP-3-O-[(3R)-3-hydroxyacyl]-alpha-D-glucosamine + a (3R)-hydroxyacyl-[ACP] = a UDP-2-N,3-O-bis[(3R)-3-hydroxyacyl]-alpha-D-glucosamine + holo-[ACP] + H(+). It participates in bacterial outer membrane biogenesis; LPS lipid A biosynthesis. Functionally, catalyzes the N-acylation of UDP-3-O-acylglucosamine using 3-hydroxyacyl-ACP as the acyl donor. Is involved in the biosynthesis of lipid A, a phosphorylated glycolipid that anchors the lipopolysaccharide to the outer membrane of the cell. The chain is UDP-3-O-acylglucosamine N-acyltransferase from Desulfosudis oleivorans (strain DSM 6200 / JCM 39069 / Hxd3) (Desulfococcus oleovorans).